The primary structure comprises 548 residues: Probable malate:quinone oxidoreductase (548 aa).

Residues 522–548 (KPQAADSTPKAQLKPQPARKEVADIAL) form a disordered region. Over residues 539–548 (ARKEVADIAL) the composition is skewed to basic and acidic residues.

Belongs to the MQO family. FAD is required as a cofactor.

The enzyme catalyses (S)-malate + a quinone = a quinol + oxaloacetate. The protein operates within carbohydrate metabolism; tricarboxylic acid cycle; oxaloacetate from (S)-malate (quinone route): step 1/1. This Escherichia fergusonii (strain ATCC 35469 / DSM 13698 / CCUG 18766 / IAM 14443 / JCM 21226 / LMG 7866 / NBRC 102419 / NCTC 12128 / CDC 0568-73) protein is Probable malate:quinone oxidoreductase.